We begin with the raw amino-acid sequence, 343 residues long: Ribosomal RNA small subunit methyltransferase C (343 aa).

It belongs to the methyltransferase superfamily. RsmC family. As to quaternary structure, monomer.

It is found in the cytoplasm. The enzyme catalyses guanosine(1207) in 16S rRNA + S-adenosyl-L-methionine = N(2)-methylguanosine(1207) in 16S rRNA + S-adenosyl-L-homocysteine + H(+). In terms of biological role, specifically methylates the guanine in position 1207 of 16S rRNA in the 30S particle. The protein is Ribosomal RNA small subunit methyltransferase C of Escherichia coli (strain ATCC 8739 / DSM 1576 / NBRC 3972 / NCIMB 8545 / WDCM 00012 / Crooks).